The chain runs to 371 residues: Probable F-box protein At1g65740 (371 aa).

One can recognise an F-box domain in the interval 2–49; the sequence is VDWSTLPEELLHFIAARSFSLVEYKRFSSICVSWHSSVSGVKKNPFHR.

The chain is Probable F-box protein At1g65740 from Arabidopsis thaliana (Mouse-ear cress).